A 226-amino-acid chain; its full sequence is Uracil-DNA glycosylase (226 aa).

D65 (proton acceptor) is an active-site residue.

It belongs to the uracil-DNA glycosylase (UDG) superfamily. UNG family.

The protein resides in the cytoplasm. The catalysed reaction is Hydrolyzes single-stranded DNA or mismatched double-stranded DNA and polynucleotides, releasing free uracil.. Functionally, excises uracil residues from the DNA which can arise as a result of misincorporation of dUMP residues by DNA polymerase or due to deamination of cytosine. This chain is Uracil-DNA glycosylase, found in Enterococcus faecalis (strain ATCC 700802 / V583).